The chain runs to 160 residues: Large ribosomal subunit protein uL30m (160 aa).

The N-terminal 34 residues, 1–34, are a transit peptide targeting the mitochondrion; it reads MAGVLRSVFQRPPGRLQTVKKGAESLIGTEWIRH. The tract at residues 45 to 64 is disordered; sequence VFQPRPEDHEKYGGDPQNPH.

This sequence belongs to the universal ribosomal protein uL30 family. Component of the mitochondrial ribosome large subunit (39S) which comprises a 16S rRNA and about 50 distinct proteins.

It is found in the mitochondrion. In Rattus norvegicus (Rat), this protein is Large ribosomal subunit protein uL30m (Mrpl30).